Here is a 361-residue protein sequence, read N- to C-terminus: 4-oxalomesaconate tautomerase (361 aa).

Belongs to the PrpF family.

The catalysed reaction is (1E)-4-oxobut-1-ene-1,2,4-tricarboxylate = 4-carboxy-2-hydroxy-cis,cis-muconate. Catalyzes the tautomerization of the 4-oxalomesaconic acid keto (OMAketo) generated by GalA dioxygenase to 4-oxalomesaconic acid enol (OMAenol). Mediates the second step in gallate degradation pathway. The polypeptide is 4-oxalomesaconate tautomerase (galD) (Pseudomonas putida (strain ATCC 47054 / DSM 6125 / CFBP 8728 / NCIMB 11950 / KT2440)).